A 494-amino-acid chain; its full sequence is MDGSGERSLPEPGSQSSAASDDIEIVVNVGGVRQVLYGDLLSQYPETRLAELINCLAGGYDTIFSLCDDYDPGKREFYFDRDPDAFKCVIEVYYFGEVHMKKGICPICFKNEMDFWKVDLKFLDDCCKSHLSEKREELEEIARRVQLILDDLGVDAAEGRWRRCQKCVWKFLEKPESSCPARVVAVLSFLLILVSSVVMCMGTIPELQVLDAEGNRVEHPTLENVETACIGWFTLEYLLRLFSSPNKLHFALSFMNIVDVLAILPFYVSLTLTHLGARMMELTNVQQAVQALRIMRIARIFKLARHSSGLQTLTYALKRSFKELGLLLMYLAVGIFVFSALGYTMEQSHPETLFKSIPQSFWWAIITMTTVGYGDIYPKTTLGKLNAAISFLCGVIAIALPIHPIINNFVRYYNKQRVLETAAKHELELMELNSSSGGEGKTGGSRSDLDNLPPEPAGKEAPSCSSRLKLSHSDTFIPLLTEEKHHRTRLQSCK.

Residues 1–183 (MDGSGERSLP…KPESSCPARV (183 aa)) are Cytoplasmic-facing. Residues 184-204 (VAVLSFLLILVSSVVMCMGTI) traverse the membrane as a helical segment. A helical transmembrane segment spans residues 224–244 (NVETACIGWFTLEYLLRLFSS). At 245 to 249 (PNKLH) the chain is on the cytoplasmic side. A helical transmembrane segment spans residues 250 to 270 (FALSFMNIVDVLAILPFYVSL). Residues 290-310 (QALRIMRIARIFKLARHSSGL) form a helical; Voltage-sensor membrane-spanning segment. The Cytoplasmic portion of the chain corresponds to 311–324 (QTLTYALKRSFKEL). A helical membrane pass occupies residues 325–345 (GLLLMYLAVGIFVFSALGYTM). The pore-forming intramembrane region spans 358–378 (PQSFWWAIITMTTVGYGDIYP). The Selectivity filter motif lies at 370–375 (TVGYGD). The helical transmembrane segment at 386–406 (NAAISFLCGVIAIALPIHPII) threads the bilayer. Topologically, residues 407–494 (NNFVRYYNKQ…HHRTRLQSCK (88 aa)) are cytoplasmic. Residues 433 to 469 (NSSSGGEGKTGGSRSDLDNLPPEPAGKEAPSCSSRLK) form a disordered region.

It belongs to the potassium channel family. F (TC 1.A.1.2) subfamily. Kv5.1/KCNF1 sub-subfamily. As to quaternary structure, heterotetramer with KCNB1 or KCNB2. Detected in heart, brain, liver, skeletal muscle, kidney and pancreas.

It localises to the cell membrane. Regulatory alpha-subunit of the voltage-gated potassium (Kv) channel which, when coassembled with KCNB1 or KCNB2, can modulate their expression and their gating kinetics by acting on deactivation upon repolarization and inactivation during maintained depolarization. Accelerates inactivation but has relatively little effect on deactivation. Coexpression with KCNB1 or KCNB2 markedly slows inactivation. Each modulatory subunit has its own specific properties of regulation, and can lead to extensive inhibitions, to large changes in kinetics, and/or to large shifts in the voltage dependencies of the inactivation process. The gating kinetics depends on the nature and stoichiometry of the associated regulatory sunbunit. Fails to produce a potassium current when expressed alone. The polypeptide is Voltage-gated potassium channel regulatory subunit KCNF1 (Homo sapiens (Human)).